Here is a 369-residue protein sequence, read N- to C-terminus: Fructose-bisphosphate aldolase 2 (369 aa).

A dihydroxyacetone phosphate-binding site is contributed by Asp-40. Residues Ser-42 and Thr-45 each contribute to the D-glyceraldehyde 3-phosphate site. Arg-49 serves as a coordination point for beta-D-fructose 1,6-bisphosphate. Lys-113 contributes to the D-glyceraldehyde 3-phosphate binding site. Dihydroxyacetone phosphate is bound at residue Lys-152. A D-glyceraldehyde 3-phosphate-binding site is contributed by Glu-195. Glu-195 serves as the catalytic Proton acceptor. Residues Lys-237, Ser-279, and Gly-280 each coordinate dihydroxyacetone phosphate. Lys-237 functions as the Schiff-base intermediate with dihydroxyacetone phosphate in the catalytic mechanism. Residues 279-281 and Ser-307 each bind beta-D-fructose 1,6-bisphosphate; that span reads SGG. Residues Gly-309 and Arg-310 each contribute to the dihydroxyacetone phosphate site. Residue Arg-310 coordinates beta-D-fructose 1,6-bisphosphate.

This sequence belongs to the class I fructose-bisphosphate aldolase family.

The protein localises to the cytoplasm. It is found in the membrane. Its subcellular location is the host cell membrane. It catalyses the reaction beta-D-fructose 1,6-bisphosphate = D-glyceraldehyde 3-phosphate + dihydroxyacetone phosphate. It functions in the pathway carbohydrate degradation; glycolysis; D-glyceraldehyde 3-phosphate and glycerone phosphate from D-glucose: step 4/4. Functionally, plays a key role in glycolysis by catalyzing the cleavage of fructose 1,6-bisphosphate into dihydroxyacetone phosphate and glyceraldehyde 3-phosphate. This is Fructose-bisphosphate aldolase 2 (ALDO2) from Plasmodium berghei (strain Anka).